A 94-amino-acid polypeptide reads, in one-letter code: Integration host factor subunit beta (94 aa).

The protein belongs to the bacterial histone-like protein family. As to quaternary structure, heterodimer of an alpha and a beta chain.

Its function is as follows. This protein is one of the two subunits of integration host factor, a specific DNA-binding protein that functions in genetic recombination as well as in transcriptional and translational control. This is Integration host factor subunit beta (ihfB) from Pasteurella multocida (strain Pm70).